A 423-amino-acid chain; its full sequence is UDP-N-acetylglucosamine 1-carboxyvinyltransferase 2 (423 aa).

A phosphoenolpyruvate-binding site is contributed by 23 to 24 (KN). Residue arginine 95 participates in UDP-N-acetyl-alpha-D-glucosamine binding. The active-site Proton donor is the cysteine 119. Cysteine 119 bears the 2-(S-cysteinyl)pyruvic acid O-phosphothioketal mark. UDP-N-acetyl-alpha-D-glucosamine-binding residues include aspartate 306 and isoleucine 328.

It belongs to the EPSP synthase family. MurA subfamily.

It localises to the cytoplasm. The catalysed reaction is phosphoenolpyruvate + UDP-N-acetyl-alpha-D-glucosamine = UDP-N-acetyl-3-O-(1-carboxyvinyl)-alpha-D-glucosamine + phosphate. It participates in cell wall biogenesis; peptidoglycan biosynthesis. Functionally, cell wall formation. Adds enolpyruvyl to UDP-N-acetylglucosamine. The sequence is that of UDP-N-acetylglucosamine 1-carboxyvinyltransferase 2 from Symbiobacterium thermophilum (strain DSM 24528 / JCM 14929 / IAM 14863 / T).